A 564-amino-acid chain; its full sequence is Dihydroxy-acid dehydratase (564 aa).

Cys51 serves as a coordination point for [2Fe-2S] cluster. Residue Asp83 coordinates Mg(2+). [2Fe-2S] cluster is bound at residue Cys124. Asp125 and Lys126 together coordinate Mg(2+). Lys126 bears the N6-carboxylysine mark. Residue Cys196 coordinates [2Fe-2S] cluster. Glu448 is a Mg(2+) binding site. Residue Ser474 is the Proton acceptor of the active site.

The protein belongs to the IlvD/Edd family. As to quaternary structure, homodimer. [2Fe-2S] cluster is required as a cofactor. It depends on Mg(2+) as a cofactor.

The catalysed reaction is (2R)-2,3-dihydroxy-3-methylbutanoate = 3-methyl-2-oxobutanoate + H2O. It carries out the reaction (2R,3R)-2,3-dihydroxy-3-methylpentanoate = (S)-3-methyl-2-oxopentanoate + H2O. It functions in the pathway amino-acid biosynthesis; L-isoleucine biosynthesis; L-isoleucine from 2-oxobutanoate: step 3/4. It participates in amino-acid biosynthesis; L-valine biosynthesis; L-valine from pyruvate: step 3/4. In terms of biological role, functions in the biosynthesis of branched-chain amino acids. Catalyzes the dehydration of (2R,3R)-2,3-dihydroxy-3-methylpentanoate (2,3-dihydroxy-3-methylvalerate) into 2-oxo-3-methylpentanoate (2-oxo-3-methylvalerate) and of (2R)-2,3-dihydroxy-3-methylbutanoate (2,3-dihydroxyisovalerate) into 2-oxo-3-methylbutanoate (2-oxoisovalerate), the penultimate precursor to L-isoleucine and L-valine, respectively. The polypeptide is Dihydroxy-acid dehydratase (Polynucleobacter asymbioticus (strain DSM 18221 / CIP 109841 / QLW-P1DMWA-1) (Polynucleobacter necessarius subsp. asymbioticus)).